Reading from the N-terminus, the 258-residue chain is Phosphate import ATP-binding protein PstB (258 aa).

One can recognise an ABC transporter domain in the interval I5–K247. G37–S44 contacts ATP.

The protein belongs to the ABC transporter superfamily. Phosphate importer (TC 3.A.1.7) family. In terms of assembly, the complex is composed of two ATP-binding proteins (PstB), two transmembrane proteins (PstC and PstA) and a solute-binding protein (PstS).

The protein localises to the cell membrane. It catalyses the reaction phosphate(out) + ATP + H2O = ADP + 2 phosphate(in) + H(+). Its function is as follows. Part of the ABC transporter complex PstSACB involved in phosphate import. Responsible for energy coupling to the transport system. The chain is Phosphate import ATP-binding protein PstB from Frankia casuarinae (strain DSM 45818 / CECT 9043 / HFP020203 / CcI3).